The chain runs to 721 residues: Polyribonucleotide nucleotidyltransferase (721 aa).

Residues Asp495 and Asp501 each contribute to the Mg(2+) site. Residues 562–621 enclose the KH domain; that stretch reads PRLLSFRIDPELIGTVIGPGGRTIKGITERTNTKIDIEDGGIVTIASHDGAAAEEAQKII. In terms of domain architecture, S1 motif spans 631 to 699; it reads GEIFPGVVTR…SRGRINLTLR (69 aa). A disordered region spans residues 702-721; that stretch reads GQNGGMSYPEPTPTPVAPLS. Pro residues predominate over residues 711–721; that stretch reads EPTPTPVAPLS.

This sequence belongs to the polyribonucleotide nucleotidyltransferase family. Mg(2+) is required as a cofactor.

It localises to the cytoplasm. The catalysed reaction is RNA(n+1) + phosphate = RNA(n) + a ribonucleoside 5'-diphosphate. In terms of biological role, involved in mRNA degradation. Catalyzes the phosphorolysis of single-stranded polyribonucleotides processively in the 3'- to 5'-direction. This is Polyribonucleotide nucleotidyltransferase from Prochlorococcus marinus (strain MIT 9301).